Here is a 175-residue protein sequence, read N- to C-terminus: NADH-ubiquinone oxidoreductase chain 6 (175 aa).

The next 5 helical transmembrane spans lie at 1–21 (MMTY…VGFS), 25–45 (SPIY…GIVL), 47–67 (FGGS…MMVV), 88–108 (VVLG…YYVL), and 149–169 (YGTW…VVIM).

This sequence belongs to the complex I subunit 6 family. In terms of assembly, core subunit of respiratory chain NADH dehydrogenase (Complex I) which is composed of 45 different subunits.

The protein resides in the mitochondrion inner membrane. The enzyme catalyses a ubiquinone + NADH + 5 H(+)(in) = a ubiquinol + NAD(+) + 4 H(+)(out). Its function is as follows. Core subunit of the mitochondrial membrane respiratory chain NADH dehydrogenase (Complex I) which catalyzes electron transfer from NADH through the respiratory chain, using ubiquinone as an electron acceptor. Essential for the catalytic activity and assembly of complex I. In Ovis aries (Sheep), this protein is NADH-ubiquinone oxidoreductase chain 6 (MT-ND6).